The chain runs to 126 residues: Protein ApaG (126 aa).

One can recognise an ApaG domain in the interval 2–126; the sequence is NQRLSPIKVE…FSLAVPGLLH (125 aa).

This Shewanella piezotolerans (strain WP3 / JCM 13877) protein is Protein ApaG.